Reading from the N-terminus, the 624-residue chain is Chaperone protein HtpG (624 aa).

Residues methionine 1–arginine 336 form an a; substrate-binding region. The segment at glutamate 337–lysine 552 is b. A c region spans residues leucine 553–serine 624.

It belongs to the heat shock protein 90 family. In terms of assembly, homodimer.

It is found in the cytoplasm. Functionally, molecular chaperone. Has ATPase activity. This Shigella flexneri protein is Chaperone protein HtpG.